A 276-amino-acid polypeptide reads, in one-letter code: Large ribosomal subunit protein uL2 (276 aa).

The segment at 224–276 is disordered; the sequence is AMNPIDHPHGGGEGKTSGGRNPVTPWGVPTKGKKTRKRNKSSNKYIKRVSDKG. Residues 254-270 show a composition bias toward basic residues; sequence KGKKTRKRNKSSNKYIK.

It belongs to the universal ribosomal protein uL2 family. As to quaternary structure, part of the 50S ribosomal subunit. Forms a bridge to the 30S subunit in the 70S ribosome.

One of the primary rRNA binding proteins. Required for association of the 30S and 50S subunits to form the 70S ribosome, for tRNA binding and peptide bond formation. It has been suggested to have peptidyltransferase activity; this is somewhat controversial. Makes several contacts with the 16S rRNA in the 70S ribosome. This is Large ribosomal subunit protein uL2 from Ehrlichia chaffeensis (strain ATCC CRL-10679 / Arkansas).